Reading from the N-terminus, the 201-residue chain is UPF0301 protein MSMEG_6921/MSMEI_6732 (201 aa).

The protein belongs to the UPF0301 (AlgH) family.

In Mycolicibacterium smegmatis (strain ATCC 700084 / mc(2)155) (Mycobacterium smegmatis), this protein is UPF0301 protein MSMEG_6921/MSMEI_6732.